We begin with the raw amino-acid sequence, 453 residues long: tRNA hydroxylation protein P (453 aa).

It belongs to the peptidase U32 family.

Its function is as follows. Involved in prephenate-dependent formation of 5-hydroxyuridine (ho5U) modification at position 34 in tRNAs, the first step in 5-carboxymethoxyuridine (cmo5U) biosynthesis. Involved differently in ho5U formation in each tRNA; tRNA(Leu3) and tRNA(Pro3) are major targets of TrhP. This is tRNA hydroxylation protein P from Escherichia coli (strain K12).